Here is a 193-residue protein sequence, read N- to C-terminus: Oligoribonuclease (193 aa).

Positions 20–183 (FVWLDCEMTG…ADVHESIEEL (164 aa)) constitute an Exonuclease domain. Residue Tyr-141 is part of the active site.

The protein belongs to the oligoribonuclease family.

Its subcellular location is the cytoplasm. 3'-to-5' exoribonuclease specific for small oligoribonucleotides. The chain is Oligoribonuclease from Paracidovorax citrulli (strain AAC00-1) (Acidovorax citrulli).